The chain runs to 205 residues: Interleukin-6 (205 aa).

The first 21 residues, 1-21 (RFTSAFSLGLLLVTATAFPTP), serve as a signal peptide directing secretion. Cysteines 64 and 70 form a disulfide. Serine 73 carries the phosphoserine modification. An intrachain disulfide couples cysteine 93 to cysteine 103. Asparagine 164 carries N-linked (GlcNAc...) asparagine glycosylation.

It belongs to the IL-6 superfamily. Component of a hexamer of two molecules each of IL6, IL6R and IL6ST; first binds to IL6R to associate with the signaling subunit IL6ST. Interacts with IL6R (via the N-terminal ectodomain); this interaction may be affected by IL6R-binding with SORL1, hence decreasing IL6 cis signaling. Interacts with SORL1 (via the N-terminal ectodomain); this interaction leads to IL6 internalization and lysosomal degradation. May form a trimeric complex with the soluble SORL1 ectodomain and soluble IL6R receptor; this interaction might stabilize circulating IL6, hence promoting IL6 trans signaling.

It is found in the secreted. Functionally, cytokine with a wide variety of biological functions in immunity, tissue regeneration, and metabolism. Binds to IL6R, then the complex associates to the signaling subunit IL6ST/gp130 to trigger the intracellular IL6-signaling pathway. The interaction with the membrane-bound IL6R and IL6ST stimulates 'classic signaling', whereas the binding of IL6 and soluble IL6R to IL6ST stimulates 'trans-signaling'. Alternatively, 'cluster signaling' occurs when membrane-bound IL6:IL6R complexes on transmitter cells activate IL6ST receptors on neighboring receiver cells. IL6 is a potent inducer of the acute phase response. Rapid production of IL6 contributes to host defense during infection and tissue injury, but excessive IL6 synthesis is involved in disease pathology. In the innate immune response, is synthesized by myeloid cells, such as macrophages and dendritic cells, upon recognition of pathogens through toll-like receptors (TLRs) at the site of infection or tissue injury. In the adaptive immune response, is required for the differentiation of B cells into immunoglobulin-secreting cells. Plays a major role in the differentiation of CD4(+) T cell subsets. Essential factor for the development of T follicular helper (Tfh) cells that are required for the induction of germinal-center formation. Required to drive naive CD4(+) T cells to the Th17 lineage. Also required for proliferation of myeloma cells and the survival of plasmablast cells. In terms of biological role, acts as an essential factor in bone homeostasis and on vessels directly or indirectly by induction of VEGF, resulting in increased angiogenesis activity and vascular permeability. Induces, through 'trans-signaling' and synergistically with IL1B and TNF, the production of VEGF. Involved in metabolic controls, is discharged into the bloodstream after muscle contraction increasing lipolysis and improving insulin resistance. 'Trans-signaling' in central nervous system also regulates energy and glucose homeostasis. Mediates, through GLP-1, crosstalk between insulin-sensitive tissues, intestinal L cells and pancreatic islets to adapt to changes in insulin demand. Also acts as a myokine. Plays a protective role during liver injury, being required for maintenance of tissue regeneration. Also has a pivotal role in iron metabolism by regulating HAMP/hepcidin expression upon inflammation or bacterial infection. Through activation of IL6ST-YAP-NOTCH pathway, induces inflammation-induced epithelial regeneration. This Orcinus orca (Killer whale) protein is Interleukin-6 (IL6).